The chain runs to 181 residues: MASSVISSAAVATRTNVTQAGSMIAPFTGLKSAATFPVSRKQNLDITSIASNGGRVRCMQVWPPINMKKYETLSYLPDLTDEQLLKEVEYLLKNGWVPCLEFETEHGFVYRENHKSPGYYDGRYWTMWKLPMFGCTDATQVLAEVQECKKSYPQAWIRIIGFDNVRQVQCISFIAYKPEGY.

Residues M1–R57 constitute a chloroplast transit peptide.

This sequence belongs to the RuBisCO small chain family. In terms of assembly, heterohexadecamer of 8 large and 8 small subunits.

The protein resides in the plastid. It is found in the chloroplast. Its function is as follows. RuBisCO catalyzes two reactions: the carboxylation of D-ribulose 1,5-bisphosphate, the primary event in carbon dioxide fixation, as well as the oxidative fragmentation of the pentose substrate. Both reactions occur simultaneously and in competition at the same active site. Although the small subunit is not catalytic it is essential for maximal activity. The sequence is that of Ribulose bisphosphate carboxylase small subunit, chloroplastic 2 from Solanum tuberosum (Potato).